The following is a 394-amino-acid chain: Aspergillopepsin-1 (394 aa).

The signal sequence occupies residues 1 to 20; the sequence is MVVFSKTAALVLGLSTAVSA. A propeptide spans 21–69 (activation peptide); that stretch reads APAPTRKGFTINQIARPANKTRTVNLPGLYARSLAKFGGTVPQSVKEAA. The 307-residue stretch at 85–391 folds into the Peptidase A1 domain; it reads YLTPVTVGKS…NSEGPKLGFA (307 aa). Residues Asp101 and Asp283 contribute to the active site. A disulfide bridge links Cys319 with Cys354.

The protein belongs to the peptidase A1 family.

The protein resides in the secreted. The catalysed reaction is Hydrolysis of proteins with broad specificity. Generally favors hydrophobic residues in P1 and P1', but also accepts Lys in P1, which leads to activation of trypsinogen. Does not clot milk.. Secreted aspartic endopeptidase that allows assimilation of proteinaceous substrates. The scissile peptide bond is attacked by a nucleophilic water molecule activated by two aspartic residues in the active site. Shows a broad primary substrate specificity. Favors hydrophobic residues at the P1 and P1' positions, but also accepts a lysine residue in the P1 position, leading to the activation of trypsinogen and chymotrypsinogen A. In Aspergillus niger, this protein is Aspergillopepsin-1.